We begin with the raw amino-acid sequence, 258 residues long: RBPJ-interacting and tubulin-associated protein 1 (258 aa).

Disordered stretches follow at residues 28–86 (FGSP…PRKK), 132–182 (TPPA…APRS), and 195–258 (AVPS…PPWK). Over residues 71 to 81 (SPSSRGSTPNL) the composition is skewed to polar residues. A Nuclear localization signal motif is present at residues 81-97 (LTPRKKNKYRLIGHTPS). The segment at 117–145 (RTAVEDAAKLRTLFWTPPATPRGSHSPRP) is interaction with RBPJ/RBPSUH. The tract at residues 145-258 (PRETPLRAIH…CPQKPKPPWK (114 aa)) is interaction with tubulin. Composition is skewed to polar residues over residues 201–212 (HPASTAPQTNGP) and 236–245 (GSVSGPTTPQ).

Belongs to the RITA family. As to quaternary structure, interacts with RBPJ/RBPSUH.

It localises to the cytoplasm. Its subcellular location is the nucleus. The protein resides in the cytoskeleton. The protein localises to the microtubule organizing center. It is found in the centrosome. Its function is as follows. Tubulin-binding protein that acts as a negative regulator of Notch signaling pathway. Shuttles between the cytoplasm and the nucleus and mediates the nuclear export of RBPJ/RBPSUH, thereby preventing the interaction between RBPJ/RBPSUH and NICD product of Notch proteins (Notch intracellular domain), leading to down-regulate Notch-mediated transcription. May play a role in neurogenesis. The chain is RBPJ-interacting and tubulin-associated protein 1 (Rita1) from Rattus norvegicus (Rat).